The primary structure comprises 114 residues: Hydrogenase maturation factor HypA (114 aa).

H2 is a binding site for Ni(2+). Zn(2+) contacts are provided by C73, C76, C89, and C92.

It belongs to the HypA/HybF family.

In terms of biological role, involved in the maturation of [NiFe] hydrogenases. Required for nickel insertion into the metal center of the hydrogenase. The chain is Hydrogenase maturation factor HypA from Syntrophus aciditrophicus (strain SB).